The chain runs to 92 residues: Small ribosomal subunit protein uS19 (92 aa).

Belongs to the universal ribosomal protein uS19 family.

Protein S19 forms a complex with S13 that binds strongly to the 16S ribosomal RNA. This chain is Small ribosomal subunit protein uS19, found in Nostoc punctiforme (strain ATCC 29133 / PCC 73102).